The sequence spans 389 residues: Na(+)/H(+) antiporter NhaA (389 aa).

11 helical membrane-spanning segments follow: residues 14–34 (AGGILLLVAVALAMLMANSPL), 59–79 (LILWINDGLMAVFFLLIGLEV), 95–115 (SLPTFAAIGGMLVPAGVYLLF), 124–144 (AGWAIPAATDIAFALGIMALL), 154–174 (VFLLALAIIDDLGVIVIIALF), 177–197 (TDLSTISLVIASLAIAGLVGL), 213–233 (LILWVAVLKSGVHATLAGVII), 257–277 (PWSTFFILPVFAFANAGVYVG), 292–312 (IALGLMLGKPIGVMVFSYIAV), 328–348 (IAPVAAMCGIGFTMSMFIASL), and 363–383 (LGTLIGSIMAALVGYFWLSKV).

Belongs to the NhaA Na(+)/H(+) (TC 2.A.33) antiporter family.

It localises to the cell inner membrane. The enzyme catalyses Na(+)(in) + 2 H(+)(out) = Na(+)(out) + 2 H(+)(in). In terms of biological role, na(+)/H(+) antiporter that extrudes sodium in exchange for external protons. The sequence is that of Na(+)/H(+) antiporter NhaA from Shewanella baltica (strain OS195).